The sequence spans 254 residues: Probable phosphatase Sbal223_2880 (254 aa).

9 residues coordinate Zn(2+): His-8, His-10, His-16, His-41, Glu-74, His-102, His-132, Asp-193, and His-195.

This sequence belongs to the PHP family. The cofactor is Zn(2+).

This chain is Probable phosphatase Sbal223_2880, found in Shewanella baltica (strain OS223).